The sequence spans 360 residues: Phosphoserine aminotransferase (360 aa).

Arg41 contacts L-glutamate. Pyridoxal 5'-phosphate is bound by residues 75–76 (AS), Trp99, Thr152, Asp171, and Gln194. Lys195 is subject to N6-(pyridoxal phosphate)lysine. 236 to 237 (NT) contacts pyridoxal 5'-phosphate.

The protein belongs to the class-V pyridoxal-phosphate-dependent aminotransferase family. SerC subfamily. In terms of assembly, homodimer. It depends on pyridoxal 5'-phosphate as a cofactor.

The protein resides in the cytoplasm. It carries out the reaction O-phospho-L-serine + 2-oxoglutarate = 3-phosphooxypyruvate + L-glutamate. It catalyses the reaction 4-(phosphooxy)-L-threonine + 2-oxoglutarate = (R)-3-hydroxy-2-oxo-4-phosphooxybutanoate + L-glutamate. It participates in amino-acid biosynthesis; L-serine biosynthesis; L-serine from 3-phospho-D-glycerate: step 2/3. The protein operates within cofactor biosynthesis; pyridoxine 5'-phosphate biosynthesis; pyridoxine 5'-phosphate from D-erythrose 4-phosphate: step 3/5. Catalyzes the reversible conversion of 3-phosphohydroxypyruvate to phosphoserine and of 3-hydroxy-2-oxo-4-phosphonooxybutanoate to phosphohydroxythreonine. The sequence is that of Phosphoserine aminotransferase from Porphyromonas gingivalis (strain ATCC 33277 / DSM 20709 / CIP 103683 / JCM 12257 / NCTC 11834 / 2561).